The chain runs to 201 residues: Peptidyl-tRNA hydrolase (201 aa).

Position 14 (Y14) interacts with tRNA. H19 functions as the Proton acceptor in the catalytic mechanism. TRNA contacts are provided by Y64, N66, and N112.

This sequence belongs to the PTH family. In terms of assembly, monomer.

It is found in the cytoplasm. It catalyses the reaction an N-acyl-L-alpha-aminoacyl-tRNA + H2O = an N-acyl-L-amino acid + a tRNA + H(+). Its function is as follows. Hydrolyzes ribosome-free peptidyl-tRNAs (with 1 or more amino acids incorporated), which drop off the ribosome during protein synthesis, or as a result of ribosome stalling. Functionally, catalyzes the release of premature peptidyl moieties from peptidyl-tRNA molecules trapped in stalled 50S ribosomal subunits, and thus maintains levels of free tRNAs and 50S ribosomes. This is Peptidyl-tRNA hydrolase from Bradyrhizobium sp. (strain ORS 278).